Consider the following 348-residue polypeptide: D-alanine--D-alanine ligase (348 aa).

Residues 136–344 enclose the ATP-grasp domain; it reads KSVFKSYNLP…LEKLVANLIE (209 aa). ATP is bound at residue 171–226; the sequence is NKIISYPCFIKPANLGSSVGITKAYSKEEFIAGIEFAAKYDERIIVEKSIEGRELE. The Mg(2+) site is built by Asp297, Glu311, and Asn313.

It belongs to the D-alanine--D-alanine ligase family. It depends on Mg(2+) as a cofactor. Mn(2+) serves as cofactor.

The protein resides in the cytoplasm. The enzyme catalyses 2 D-alanine + ATP = D-alanyl-D-alanine + ADP + phosphate + H(+). It functions in the pathway cell wall biogenesis; peptidoglycan biosynthesis. Functionally, cell wall formation. The chain is D-alanine--D-alanine ligase from Prochlorococcus marinus (strain NATL2A).